We begin with the raw amino-acid sequence, 117 residues long: Immunoglobulin kappa variable 1-12 (117 aa).

Residues 1-22 (MDMRVPAQLLGLLLLWFPGSRC) form the signal peptide. The segment at 23 to 45 (DIQMTQSPSSVSASVGDRVTITC) is framework-1. The 94-residue stretch at 24–117 (IQMTQSPSSV…YYCQQANSFP (94 aa)) folds into the Ig-like domain. A disulfide bridge connects residues C45 and C110. The complementarity-determining-1 stretch occupies residues 46–56 (RASQGISSWLA). The segment at 57-71 (WYQQKPGKAPKLLIY) is framework-2. The tract at residues 72-78 (AASSLQS) is complementarity-determining-2. The segment at 79 to 110 (GVPSRFSGSGSGTDFTLTISSLQPEDFATYYC) is framework-3. The segment at 111-117 (QQANSFP) is complementarity-determining-3.

In terms of assembly, immunoglobulins are composed of two identical heavy chains and two identical light chains; disulfide-linked.

It localises to the secreted. The protein localises to the cell membrane. In terms of biological role, v region of the variable domain of immunoglobulin light chains that participates in the antigen recognition. Immunoglobulins, also known as antibodies, are membrane-bound or secreted glycoproteins produced by B lymphocytes. In the recognition phase of humoral immunity, the membrane-bound immunoglobulins serve as receptors which, upon binding of a specific antigen, trigger the clonal expansion and differentiation of B lymphocytes into immunoglobulins-secreting plasma cells. Secreted immunoglobulins mediate the effector phase of humoral immunity, which results in the elimination of bound antigens. The antigen binding site is formed by the variable domain of one heavy chain, together with that of its associated light chain. Thus, each immunoglobulin has two antigen binding sites with remarkable affinity for a particular antigen. The variable domains are assembled by a process called V-(D)-J rearrangement and can then be subjected to somatic hypermutations which, after exposure to antigen and selection, allow affinity maturation for a particular antigen. In Homo sapiens (Human), this protein is Immunoglobulin kappa variable 1-12.